The sequence spans 185 residues: uncharacterized protein (185 aa).

Positions 1–18 (MLLKLILILCFLVTLSLS) are cleaved as a signal peptide. Residues 30 to 185 (TQGPTIASGG…VQDCGEITGW (156 aa)) form a disordered region. Over residues 86-101 (RAQEGGKKDTTKEQPK) the composition is skewed to basic and acidic residues. The segment covering 103–116 (NNNNKNLGRHSSSG) has biased composition (low complexity). Residues 117-135 (SGSGSGSGCGVTGDTGTGS) are compositionally biased toward gly residues.

It localises to the secreted. This is an uncharacterized protein from Dictyostelium discoideum (Social amoeba).